Here is a 264-residue protein sequence, read N- to C-terminus: Ribosomal RNA small subunit methyltransferase A (264 aa).

Asparagine 12, leucine 14, glycine 39, glutamate 60, aspartate 83, and asparagine 103 together coordinate S-adenosyl-L-methionine.

The protein belongs to the class I-like SAM-binding methyltransferase superfamily. rRNA adenine N(6)-methyltransferase family. RsmA subfamily.

It is found in the cytoplasm. It catalyses the reaction adenosine(1518)/adenosine(1519) in 16S rRNA + 4 S-adenosyl-L-methionine = N(6)-dimethyladenosine(1518)/N(6)-dimethyladenosine(1519) in 16S rRNA + 4 S-adenosyl-L-homocysteine + 4 H(+). In terms of biological role, specifically dimethylates two adjacent adenosines (A1518 and A1519) in the loop of a conserved hairpin near the 3'-end of 16S rRNA in the 30S particle. May play a critical role in biogenesis of 30S subunits. This chain is Ribosomal RNA small subunit methyltransferase A, found in Syntrophotalea carbinolica (strain DSM 2380 / NBRC 103641 / GraBd1) (Pelobacter carbinolicus).